Consider the following 318-residue polypeptide: 2-dehydro-3-deoxygalactonokinase (318 aa).

Residues 35-39, Tyr-90, 105-107, and Arg-169 each bind substrate; these read GAESN and YDR. Residues 167–169, 228–233, and 257–260 contribute to the ATP site; these read NYR, TRGEDG, and GTGD. Substrate contacts are provided by Asp-260 and Asp-296. The active-site Proton acceptor is the Asp-260.

Belongs to the carbohydrate kinase PfkB family. As to quaternary structure, homohexamer.

The catalysed reaction is 2-dehydro-3-deoxy-D-galactonate + ATP = 2-dehydro-3-deoxy-6-phospho-D-galactonate + ADP + H(+). Involved in galactose catabolism. Catalyzes the phosphorylation of 2-keto-3-deoxygalactonate (KDGal) to produce 2-keto-3-deoxy-6-phosphogalactonate (KDPGal). Can also phosphorylate 2-keto-3-deoxygluconate (KDG) to 2-keto-3-deoxy-6-phosphogluconate (KDPG), but the catalytic efficiency for KDGal is 50-fold higher than for KDG. The protein is 2-dehydro-3-deoxygalactonokinase of Haloferax volcanii (strain ATCC 29605 / DSM 3757 / JCM 8879 / NBRC 14742 / NCIMB 2012 / VKM B-1768 / DS2) (Halobacterium volcanii).